The primary structure comprises 61 residues: [Val1,Thr6]-bradykinyl-Gln,Ser (61 aa).

An N-terminal signal peptide occupies residues 1–22; sequence MSILKKSLFLVLFLGLVSFSIC. Residues 23–50 constitute a propeptide that is removed on maturation; that stretch reads EEEKREAEEEENEDEIEEQSEEKKRFEP. The segment at 25-61 is disordered; it reads EKREAEEEENEDEIEEQSEEKKRFEPVPPGFTPFRQS. Residues 30 to 42 show a composition bias toward acidic residues; sequence EEEENEDEIEEQS. Residue Pro-52 is modified to 4-hydroxyproline; in form [Val1,Hyp2,Thr6]-Bradykinyl-Gln,Ser and [Val1,Hyp2,Thr6]-Bradykinin.

Belongs to the frog skin active peptide (FSAP) family. Bradykinin-related peptide subfamily. As to expression, expressed by the skin glands.

It is found in the secreted. Functionally, induces contraction of rat ileum smooth muscle (EC(50)=2.73 uM) but has no activity towards smooth muscle from tail artery, urinary bladder or uterus up to concentrations of 100 uM. Binds to both bradykinin receptor B1 (BDKRB1) and B2 (BDKRB2); the effect via BDKRB1 is stronger. [Val1,Hyp2,Thr6]-bradykinin-Gln,Ser: Induces contraction of rat ileum smooth muscle (EC(50)=710 nM) but has no activity towards smooth muscle from tail artery, urinary bladder or uterus up to concentrations of 100 uM. Binds to both bradykinin receptor B1 (BDKRB1) and B2 (BDKRB2); the effect via BDKRB1 is stronger. Induces contraction of guinea pig ileum smooth muscle. This chain is [Val1,Thr6]-bradykinyl-Gln,Ser, found in Pithecopus hypochondrialis (Orange-legged leaf frog).